Reading from the N-terminus, the 298-residue chain is Palmitoyl-protein thioesterase 1 (298 aa).

Residues 1–16 (MRYFPLLLCLLAITTA) form the signal peptide. Asparagine 20 carries an N-linked (GlcNAc...) asparagine glycan. Intrachain disulfides connect cysteine 37-cysteine 38, cysteine 88-cysteine 120, and cysteine 144-cysteine 151. The Nucleophile role is filled by serine 107. The active site involves aspartate 224. N-linked (GlcNAc...) asparagine glycosylation is present at asparagine 250. Histidine 280 is a catalytic residue.

The protein belongs to the palmitoyl-protein thioesterase family.

It catalyses the reaction S-hexadecanoyl-L-cysteinyl-[protein] + H2O = L-cysteinyl-[protein] + hexadecanoate + H(+). Removes thioester-linked fatty acyl groups such as palmitate (hexadecanoate) from modified cysteine residues in proteins or peptides. The protein is Palmitoyl-protein thioesterase 1 (ppt-1) of Caenorhabditis elegans.